The following is a 158-amino-acid chain: Large ribosomal subunit protein uL30 (158 aa).

The protein belongs to the universal ribosomal protein uL30 family. In terms of assembly, part of the 50S ribosomal subunit.

The sequence is that of Large ribosomal subunit protein uL30 from Saccharolobus solfataricus (strain ATCC 35092 / DSM 1617 / JCM 11322 / P2) (Sulfolobus solfataricus).